Consider the following 2157-residue polypeptide: Unconventional myosin-IXb (2157 aa).

Ser2 carries the N-acetylserine modification. Residues 15–114 enclose the Ras-associating domain; that stretch reads AAYHLHIYPQ…YYFLLQERNA (100 aa). A Myosin motor domain is found at 146 to 953; that stretch reads ADFDDLCNLP…ERQALQETLH (808 aa). An ATP-binding site is contributed by 239–246; that stretch reads GESGSGKT. The interval 709-734 is disordered; sequence AEKAAGMSSPGAQSHPEELPRGASTP. Ser716 and Ser717 each carry phosphoserine. The segment at 844-855 is actin-binding; the sequence is KAEPFFIRCIRS. The neck or regulatory domain stretch occupies residues 940 to 1044; it reads LKETERQALQ…CRGHLQRKSF (105 aa). IQ domains follow at residues 957–977, 979–1000, 1001–1023, and 1024–1053; these read VRKI…RHFL, MKRA…RALE, RTQA…LYRH, and QKQS…EKQK. Ser1045 is modified (phosphoserine). A tail region spans residues 1045–2157; sequence SQMISEKQKA…LPPASGQTNG (1113 aa). Residues 1046 to 1071 adopt a coiled-coil conformation; sequence QMISEKQKAEEKEREALEAARAGAEE. 3 disordered regions span residues 1046–1298, 1320–1410, and 1455–1484; these read QMIS…TQIQ, AAAS…GSQV, and GLEA…KKNR. Basic and acidic residues-rich tracts occupy residues 1050-1063, 1109-1122, 1136-1160, 1168-1183, and 1191-1201; these read EKQK…EALE, SPLE…EAPS, ESHE…EHVK, SCKE…RRVT, and LEDKKESREDE. A phosphoserine mark is found at Ser1114, Ser1115, and Ser1122. The segment covering 1211-1222 has biased composition (polar residues); the sequence is ENTSQKQPTEQP. Residues Ser1242, Ser1253, Ser1261, and Ser1267 each carry the phosphoserine modification. Thr1271 carries the post-translational modification Phosphothreonine. Phosphoserine is present on residues Ser1290, Ser1323, and Ser1331. The residue at position 1346 (Thr1346) is a Phosphothreonine. Ser1354, Ser1356, and Ser1405 each carry phosphoserine. The span at 1467–1478 shows a compositional bias: basic and acidic residues; it reads AAGEKRTKEPGG. The Phorbol-ester/DAG-type zinc finger occupies 1632–1681; that stretch reads GHVFASYQVSIPQSCEQCLSYIWLMDKALLCSVCKMTCHKKCVHKIQSHC. Positions 1703–1888 constitute a Rho-GAP domain; sequence DSLTSDKASV…MLIKEQMRKY (186 aa). The interaction with RHOA stretch occupies residues 1739 to 1744; sequence AANRTR. Positions 1880–1901 form a coiled coil; it reads LIKEQMRKYKVKMEEISQLEAA. Phosphoserine occurs at positions 1926, 1972, 1992, and 1999. Positions 1959–1989 form a coiled coil; that stretch reads EDREKEILIERIQSIKEEKEDITYRLPELDP. Positions 1980–1993 are enriched in basic and acidic residues; that stretch reads ITYRLPELDPRGSD. A disordered region spans residues 1980–2157; sequence ITYRLPELDP…LPPASGQTNG (178 aa). Thr2005 bears the Phosphothreonine mark. Residues 2021 to 2037 show a composition bias toward pro residues; that stretch reads PPAPALPCPGAPTPSPL. Position 2050 is a phosphoserine (Ser2050). The segment covering 2081–2093 has biased composition (low complexity); sequence PRWAPGAREAAAP. Residues 2095 to 2106 are compositionally biased toward basic and acidic residues; the sequence is RRREPPARRPDQ. Ser2141 is subject to Phosphoserine.

It belongs to the TRAFAC class myosin-kinesin ATPase superfamily. Myosin family. As to quaternary structure, interacts (via IQ domains) with CALM. Interacts with RHOA. Interacts (via Rho-GAP domain) with ROBO1; this inhibits the interaction with RHOA and the stimulation of RHOA GTPase activity, and thereby increases the levels of active RHOA. In terms of tissue distribution, detected in peripheral blood leukocytes (at protein level). Expressed predominantly in peripheral blood leukocytes and at lower levels, in thymus, spleen, testis, prostate, ovary, brain, small intestine and lung.

It localises to the cytoplasm. It is found in the cell cortex. The protein localises to the perinuclear region. The protein resides in the cytoskeleton. Functionally, myosins are actin-based motor molecules with ATPase activity. Unconventional myosins serve in intracellular movements. Binds actin with high affinity both in the absence and presence of ATP and its mechanochemical activity is inhibited by calcium ions. Also acts as a GTPase activator for RHOA. Plays a role in the regulation of cell migration via its role as RHOA GTPase activator. This is regulated by its interaction with the SLIT2 receptor ROBO1; interaction with ROBO1 impairs interaction with RHOA and subsequent activation of RHOA GTPase activity, and thereby leads to increased levels of active, GTP-bound RHOA. The polypeptide is Unconventional myosin-IXb (MYO9B) (Homo sapiens (Human)).